The sequence spans 360 residues: Codeine O-demethylase (360 aa).

Residues 211–311 (GLQTMRMNYY…RLSIATFHDS (101 aa)) form the Fe2OG dioxygenase domain. 2-oxoglutarate is bound at residue Tyr220. Residues His235, Asp237, and His292 each coordinate Fe cation. Arg302 and Ser304 together coordinate 2-oxoglutarate.

The protein belongs to the iron/ascorbate-dependent oxidoreductase family. The cofactor is L-ascorbate. Requires Fe cation as cofactor. In terms of tissue distribution, mainly expressed in stems, capsules and leaves and, to a lower extent, in roots.

The enzyme catalyses codeine + 2-oxoglutarate + O2 = morphine + formaldehyde + succinate + CO2. It carries out the reaction thebaine + 2-oxoglutarate + O2 = oripavine + formaldehyde + succinate + CO2. It catalyses the reaction (S)-scoulerine + 2-oxoglutarate + O2 = (S)-3-O-demethylscoulerine + formaldehyde + succinate + CO2. The catalysed reaction is thebaine + 2-oxoglutarate + O2 = neopinone + formaldehyde + succinate + CO2. The enzyme catalyses (S)-reticuline + 2-oxoglutarate + O2 = (S)-6-O-demethylreticuline + formaldehyde + succinate + CO2. It carries out the reaction (S)-tetrahydropalmatine + S-adenosyl-L-methionine = (S)-cis-N-methyltetrahydropalmatine + S-adenosyl-L-homocysteine. Its pathway is alkaloid biosynthesis; morphine biosynthesis. Its activity is regulated as follows. Moderate substrate inhibition. Not inhibited in vitro by acylcyclohexanediones. Functionally, non-heme dioxygenase involved in biosynthesis of morphinan-type benzylisoquinoline and opiate alkaloids natural products. Mediates the conversion of codeine to morphine. Also catalyzes, with lower efficiency, the 3-O-demethylation of thebaine to oripavine and of (S)-scoulerine to 3-O-demethylscoulerine. Supports, with a lower turnover, the conversion of codeinone to morphinone, of thebaine to neopinone, and of neopine to neomorphine. Supports dealkylation reactions such as O,O-demethylenation in the metabolism of protopine, benzo[c]phenanthridine, and rhoeadine alkaloids; cleaves a methylenedioxy bridge leaving two hydroxyl groups. Catalyzes the O,O-demethylenation of methylenedioxy bridges on protopine alkaloids such as allocryptopine, cryptopine and protopine. No activity with (S)-reticuline, salutaridine, papaverine, (S)-corytuberine, oripavine, pavine or noscapine. This Papaver somniferum (Opium poppy) protein is Codeine O-demethylase.